Here is a 473-residue protein sequence, read N- to C-terminus: Argininosuccinate lyase (473 aa).

Belongs to the lyase 1 family. Argininosuccinate lyase subfamily.

It is found in the cytoplasm. It catalyses the reaction 2-(N(omega)-L-arginino)succinate = fumarate + L-arginine. It participates in amino-acid biosynthesis; L-arginine biosynthesis; L-arginine from L-ornithine and carbamoyl phosphate: step 3/3. In Chelativorans sp. (strain BNC1), this protein is Argininosuccinate lyase.